Reading from the N-terminus, the 495-residue chain is MRLTRCQAALAAAITLNLLVLFYVSWLQHQPRNSRARGPRRASAAGPRVTVLVREFEAFDNAVPELVDSFLQQDPAQPVVVAADTLPYPPLALPRIPNVRLALLQPALDRPAAASRPETYVATEFVALVPDGARAEAPGLLERMVEALRAGSARLVAAPVATANPARCLALNVSLREWTARYGAAPAAPRCDALDGDAVVLLRARDLFNLSAPLARPVGTSLFLQTALRGWAVQLLDLTFAAARQPPLATAHARWKAEREGRARRAALLRALGIRLVSWEGGRLEWFGCNKETTRCFGTVVGDTPAYLYEERWTPPCCLRALRETARYVVGVLEAAGVRYWLEGGSLLGAARHGDIIPWDYDVDLGIYLEDVGNCEQLRGAEAGSVVDERGFVWEKAVEGDFFRVQYSESNHLHVDLWPFYPRNGVMTKDTWLDHRQDVEFPEHFLQPLVPLPFAGFVAQAPNNYRRFLELKFGPGVIENPQYPNPALLSLTGSG.

Topologically, residues 1 to 6 (MRLTRC) are cytoplasmic. Residues 7–29 (QAALAAAITLNLLVLFYVSWLQH) traverse the membrane as a helical segment. The Lumenal segment spans residues 30-495 (QPRNSRARGP…PALLSLTGSG (466 aa)). An intrachain disulfide couples Cys-168 to Cys-191. Asn-172 and Asn-209 each carry an N-linked (GlcNAc...) asparagine glycan. 4 residues coordinate Zn(2+): Cys-289, Cys-296, Cys-317, and Cys-318. Residues 289–318 (CNKETTRCFGTVVGDTPAYLYEERWTPPCC) form a zinc finger loop region. Residues Gly-345, Arg-352, 359-364 (WDYDVD), 437-438 (QD), and 480-482 (NPQ) each bind CDP-L-ribitol. Positions 360, 362, and 364 each coordinate Mg(2+).

It belongs to the LicD transferase family. As to quaternary structure, homodimer; disulfide-linked. Tetramer. Forms a complex composed of FKRP, FKTN/fukutin, and RXYLT1/TMEM5. Also exists as large multimeric protein complexes. May interact with the dystrophin-glycoprotein complex (DGC). Mg(2+) is required as a cofactor. Post-translationally, N-glycosylated. As to expression, expressed in the retina (at protein level). Expressed predominantly in skeletal muscle, placenta, and heart and relatively weakly in brain, lung, liver, kidney, and pancreas.

The protein resides in the golgi apparatus membrane. It is found in the secreted. The protein localises to the cell membrane. Its subcellular location is the sarcolemma. It localises to the rough endoplasmic reticulum. The protein resides in the cytoplasm. It catalyses the reaction 3-O-[Rib-ol-P-3-beta-D-GalNAc-(1-&gt;3)-beta-D-GlcNAc-(1-&gt;4)-(O-6-P-alpha-D-Man)]-Thr-[protein] + CDP-L-ribitol = 3-O-[Rib-ol-P-Rib-ol-P-3-beta-D-GalNAc-(1-&gt;3)-beta-D-GlcNAc-(1-&gt;4)-(O-6-P-alpha-D-Man)]-Thr-[protein] + CMP + H(+). Its pathway is protein modification; protein glycosylation. In terms of biological role, catalyzes the transfer of a ribitol 5-phosphate from CDP-L-ribitol to the ribitol 5-phosphate previously attached by FKTN/fukutin to the phosphorylated O-mannosyl trisaccharide (N-acetylgalactosamine-beta-3-N-acetylglucosamine-beta-4-(phosphate-6-)mannose), a carbohydrate structure present in alpha-dystroglycan (DAG1). This constitutes the second step in the formation of the ribose 5-phosphate tandem repeat which links the phosphorylated O-mannosyl trisaccharide to the ligand binding moiety composed of repeats of 3-xylosyl-alpha-1,3-glucuronic acid-beta-1. This is Ribitol 5-phosphate transferase FKRP from Homo sapiens (Human).